Here is a 106-residue protein sequence, read N- to C-terminus: RxLR effector protein PSR1 (106 aa).

Positions 1-20 are cleaved as a signal peptide; it reads MRLTYVLLVAVTTLLVSCDA. A RxLR-dEER motif is present at residues 33-46; that stretch reads RLLRFVEAADEEER. The WY domain stretch occupies residues 50–106; the sequence is FSPEKLRKMLGDETYRLKKFGKWDSDGHTFDGLKHYLLLSDSSMVKLRNMYKAWLEQ. The short motif at 56-69 is the Bipartite nuclear localization signal (NLS) element; the sequence is RKMLGDETYRLKKF.

It belongs to the RxLR effector family. Interacts with host PINP1.

Its subcellular location is the secreted. It localises to the host nucleus. Its function is as follows. Secreted effector that possesses RNA silencing suppression activity by inhibiting the biogenesis of small RNAs in the host plant to promote enhanced susceptibility of host to the pathogen during infection. Interferes with secondary siRNA production by associating with host nuclear protein PINP1 that acts as a regulator of the accumulation of both microRNAs and endogenous small interfering RNAs. The protein is RxLR effector protein PSR1 of Phytophthora sojae (Soybean stem and root rot agent).